Here is a 1274-residue protein sequence, read N- to C-terminus: RNA-directed RNA polymerase VP2 (1274 aa).

Residues 561–798 (LSTTSGSVVT…KLYALMGCRI (238 aa)) form the RdRp catalytic domain.

The protein belongs to the reoviridae RNA-directed RNA polymerase family.

It is found in the virion. It carries out the reaction RNA(n) + a ribonucleoside 5'-triphosphate = RNA(n+1) + diphosphate. Functionally, RNA-directed RNA polymerase that is involved in transcription and genome replication. Following infection, it catalyzes the synthesis of fully conservative plus strands. After core assembly, which consists in recruitment of one capped plus-strand for each genomic segments and polymerase complexes, the polymerase switches mode and catalyzes the synthesis of complementary minus-strands. This Aquareovirus C (isolate Golden shiner/USA/GSRV/1977) (AQRV-C) protein is RNA-directed RNA polymerase VP2 (S2).